Consider the following 776-residue polypeptide: Zinc finger CCCH-type antiviral protein 1 (776 aa).

Ala2 carries the N-acetylalanine modification. The interval Ala2–Leu254 is N-terminal domain. The Nuclear localization signal motif lies at Arg69–Lys76. 4 C3H1-type zinc fingers span residues Cys73–His86, Cys88–His110, Cys150–His172, and Glu169–Leu193. Positions Asn221–Ser249 are disordered. The tract at residues Ala224–Leu254 is binding to EXOSC5. Residues Ser257, Ser262, Ser266, and Ser270 each carry the phosphoserine; by GSK3-beta modification. Phosphoserine is present on Ser274. A Phosphothreonine modification is found at Thr278. Phosphoserine is present on Ser283. The Nuclear export signal motif lies at Leu284 to Val291. Positions Pro308 to Val355 are disordered. Over residues Gly318–Glu327 the composition is skewed to polar residues. Phosphoserine is present on residues Ser325, Ser351, and Ser398. The segment covering Asp344–Ala353 has biased composition (low complexity). A Nuclear localization signal motif is present at residues Lys405–Lys406. A disordered region spans residues Trp457 to Ser483. The segment covering Ser459–Ser483 has biased composition (polar residues). Tyr501 carries the post-translational modification Phosphotyrosine. Residues Leu512–Arg562 are disordered. Low complexity predominate over residues Gln523–Gly546. Residues Ser544 and Ser667 each carry the phosphoserine modification. The region spanning Tyr671–Arg758 is the WWE domain.

It belongs to the ARTD/PARP family. In terms of assembly, homodimer or homooligomer. Homooligomerization is essential for its antiviral activity. Interacts with EXOSC5. Interacts with EXOSC3, EXOSC7, DCP2 and DCP1A. Interacts with PARN in an RNA-independent manner. Interacts with XRN1 in an RNA-dependent manner. Interacts (via N-terminal domain) with DHX30 (via N-terminus) in an RNA-independent manner. Interacts (via N-terminal domain) with DDX17 in an RNA-independent manner. Phosphorylation at Ser-274 is essential for sequential phosphorylation of Ser-270, Ser-266, Ser-262 and Ser-257 by GSK3-beta. Phosphorylation by GSK3-beta enhances its antiviral activity. As to expression, expressed in the kidney and liver.

It localises to the cytoplasm. The protein localises to the nucleus. Antiviral protein which inhibits the replication of viruses by recruiting the cellular RNA degradation machineries to degrade the viral mRNAs. Binds to a ZAP-responsive element (ZRE) present in the target viral mRNA, recruits cellular poly(A)-specific ribonuclease PARN to remove the poly(A) tail, and the 3'-5' exoribonuclease complex exosome to degrade the RNA body from the 3'-end. It also recruits the decapping complex DCP1-DCP2 through RNA helicase p72 (DDX17) to remove the cap structure of the viral mRNA to initiate its degradation from the 5'-end. Its target viruses belong to families which include retroviridae: human immunodeficiency virus type 1 (HIV-1) and moloney and murine leukemia virus (MoMLV), filoviridae: ebola virus (EBOV) and marburg virus (MARV), togaviridae: sindbis virus (SINV) and Ross river virus (RRV). Specifically targets the multiply spliced but not unspliced or singly spliced HIV-1 mRNAs for degradation. The sequence is that of Zinc finger CCCH-type antiviral protein 1 (Zc3hav1) from Rattus norvegicus (Rat).